The following is a 288-amino-acid chain: Small ribosomal subunit protein uS3 (288 aa).

Residues 38 to 106 form the KH type-2 domain; that stretch reads IRRMMSKGLE…QVQLNIIEVK (69 aa). Residues 209 to 288 are disordered; the sequence is PGRETPAEAP…TQPAETQQEG (80 aa). Basic and acidic residues predominate over residues 219–232; that stretch reads SRPRRERGDRSERP. Positions 249–264 are enriched in low complexity; that stretch reads AGRAAATTIAQAAETP. Positions 277–288 are enriched in polar residues; that stretch reads AATQPAETQQEG.

This sequence belongs to the universal ribosomal protein uS3 family. Part of the 30S ribosomal subunit. Forms a tight complex with proteins S10 and S14.

Its function is as follows. Binds the lower part of the 30S subunit head. Binds mRNA in the 70S ribosome, positioning it for translation. In Salinispora arenicola (strain CNS-205), this protein is Small ribosomal subunit protein uS3.